The sequence spans 370 residues: MSLSSLPGSFSSSSHPLVPYGWDADWEAEFAPYDSEGLLAGRVIRVDRGQCDVVTPGGMLRADTAFVTPHDPMRVVCTGDWVAVEPAGDPRYVRTYLPRRSAFVRSTSSKRSEGQILAANVDYAVVAVSLAVELDLGRVERFLALAWESGAQPVVVLTKADLVPDATTLSYLVQDVETAAPGVPVLSVSSNLGEGLDVLAAVLSGGTSVLLGQSGAGKSTLANALLGEDVMKVHATRDVDGKGRHTTTTRNLLALPGGGVLIDTPGLRGVGLWDAETGVNQVFSEIEALAAECRFHDCAHTAEPGCAVLAALDTGELPERRLDSYRKLLRENQRIVAKTDARLRAEIRRDWKRKGAEGKAAMEAKRGQWG.

Residues 111-270 (RSEGQILAAN…LIDTPGLRGV (160 aa)) enclose the CP-type G domain. GTP contacts are provided by residues 158–161 (TKAD) and 212–220 (GQSGAGKST). Residues cysteine 293, cysteine 298, histidine 300, and cysteine 306 each coordinate Zn(2+).

It belongs to the TRAFAC class YlqF/YawG GTPase family. RsgA subfamily. In terms of assembly, monomer. Associates with 30S ribosomal subunit, binds 16S rRNA. Zn(2+) serves as cofactor.

It is found in the cytoplasm. Its function is as follows. One of several proteins that assist in the late maturation steps of the functional core of the 30S ribosomal subunit. Helps release RbfA from mature subunits. May play a role in the assembly of ribosomal proteins into the subunit. Circularly permuted GTPase that catalyzes slow GTP hydrolysis, GTPase activity is stimulated by the 30S ribosomal subunit. The protein is Small ribosomal subunit biogenesis GTPase RsgA of Streptomyces avermitilis (strain ATCC 31267 / DSM 46492 / JCM 5070 / NBRC 14893 / NCIMB 12804 / NRRL 8165 / MA-4680).